The following is a 1918-amino-acid chain: Diacylglycerol kinase eta (1918 aa).

Residues 1 to 10 (MAHLKLDTLH) show a composition bias toward basic and acidic residues. The tract at residues 1-37 (MAHLKLDTLHVQRSPRGSRRSSPSSGRSSACSSGSIS) is disordered. Residues 20–37 (RSSPSSGRSSACSSGSIS) show a composition bias toward low complexity. The 94-residue stretch at 82–175 (AIIKEGFLLK…WLGGLKTATA (94 aa)) folds into the PH domain. 2 consecutive Phorbol-ester/DAG-type zinc fingers follow at residues 195–245 (HHHW…IANC) and 268–319 (PHQW…AVAC). Residues 350–486 (GNFSPLLVFV…DRWSIMVFEK (137 aa)) form the DAGKc domain. 4 disordered regions span residues 783–805 (GANI…NTPT), 1017–1067 (TTLC…DDNP), 1177–1212 (PNTI…GDSI), and 1380–1399 (ERDK…TEEA). The segment covering 1177–1189 (PNTILTTSTSPTK) has biased composition (polar residues). One can recognise an SAM domain in the interval 1855-1918 (WSVNEVVTWL…LQAIKDLSEN (64 aa)).

The protein belongs to the eukaryotic diacylglycerol kinase family.

It is found in the cytoplasm. It carries out the reaction a 1,2-diacyl-sn-glycerol + ATP = a 1,2-diacyl-sn-glycero-3-phosphate + ADP + H(+). Functionally, phosphorylates diacylglycerol (DAG) to generate phosphatidic acid (PA). The protein is Diacylglycerol kinase eta of Drosophila erecta (Fruit fly).